The following is a 208-amino-acid chain: uncharacterized protein (208 aa).

This is an uncharacterized protein from Bacillus subtilis (strain 168).